The following is a 750-amino-acid chain: 1,4-alpha-glucan branching enzyme GlgB (750 aa).

Aspartate 425 functions as the Nucleophile in the catalytic mechanism. Glutamate 478 (proton donor) is an active-site residue.

The protein belongs to the glycosyl hydrolase 13 family. GlgB subfamily. In terms of assembly, monomer.

The catalysed reaction is Transfers a segment of a (1-&gt;4)-alpha-D-glucan chain to a primary hydroxy group in a similar glucan chain.. Its pathway is glycan biosynthesis; glycogen biosynthesis. Functionally, catalyzes the formation of the alpha-1,6-glucosidic linkages in glycogen by scission of a 1,4-alpha-linked oligosaccharide from growing alpha-1,4-glucan chains and the subsequent attachment of the oligosaccharide to the alpha-1,6 position. The sequence is that of 1,4-alpha-glucan branching enzyme GlgB from Cupriavidus pinatubonensis (strain JMP 134 / LMG 1197) (Cupriavidus necator (strain JMP 134)).